Reading from the N-terminus, the 417-residue chain is Serine hydroxymethyltransferase (417 aa).

(6S)-5,6,7,8-tetrahydrofolate is bound by residues L120 and 124-126 (GHL). K229 carries the N6-(pyridoxal phosphate)lysine modification.

Belongs to the SHMT family. In terms of assembly, homodimer. It depends on pyridoxal 5'-phosphate as a cofactor.

It is found in the cytoplasm. The enzyme catalyses (6R)-5,10-methylene-5,6,7,8-tetrahydrofolate + glycine + H2O = (6S)-5,6,7,8-tetrahydrofolate + L-serine. The protein operates within one-carbon metabolism; tetrahydrofolate interconversion. Its pathway is amino-acid biosynthesis; glycine biosynthesis; glycine from L-serine: step 1/1. Its function is as follows. Catalyzes the reversible interconversion of serine and glycine with tetrahydrofolate (THF) serving as the one-carbon carrier. This reaction serves as the major source of one-carbon groups required for the biosynthesis of purines, thymidylate, methionine, and other important biomolecules. Also exhibits THF-independent aldolase activity toward beta-hydroxyamino acids, producing glycine and aldehydes, via a retro-aldol mechanism. This is Serine hydroxymethyltransferase from Anaeromyxobacter dehalogenans (strain 2CP-C).